A 243-amino-acid chain; its full sequence is Phosphoadenosine 5'-phosphosulfate reductase (243 aa).

Catalysis depends on Cys-239, which acts as the Nucleophile; cysteine thiosulfonate intermediate.

The protein belongs to the PAPS reductase family. CysH subfamily.

It is found in the cytoplasm. The catalysed reaction is [thioredoxin]-disulfide + sulfite + adenosine 3',5'-bisphosphate + 2 H(+) = [thioredoxin]-dithiol + 3'-phosphoadenylyl sulfate. The protein operates within sulfur metabolism; hydrogen sulfide biosynthesis; sulfite from sulfate: step 3/3. Functionally, catalyzes the formation of sulfite from phosphoadenosine 5'-phosphosulfate (PAPS) using thioredoxin as an electron donor. The chain is Phosphoadenosine 5'-phosphosulfate reductase from Proteus mirabilis (strain HI4320).